A 334-amino-acid chain; its full sequence is Dihydroorotate dehydrogenase (quinone) (334 aa).

FMN-binding positions include 59-63 (AGLDK) and T83. A substrate-binding site is contributed by K63. 108-112 (NRMGF) provides a ligand contact to substrate. N136 and N169 together coordinate FMN. N169 is a binding site for substrate. S172 serves as the catalytic Nucleophile. Position 174 (N174) interacts with substrate. FMN-binding residues include K214 and T242. 243–244 (NT) is a substrate binding site. Residues G265, G294, and 315 to 316 (YS) each bind FMN.

It belongs to the dihydroorotate dehydrogenase family. Type 2 subfamily. As to quaternary structure, monomer. The cofactor is FMN.

It localises to the cell membrane. The enzyme catalyses (S)-dihydroorotate + a quinone = orotate + a quinol. Its pathway is pyrimidine metabolism; UMP biosynthesis via de novo pathway; orotate from (S)-dihydroorotate (quinone route): step 1/1. Catalyzes the conversion of dihydroorotate to orotate with quinone as electron acceptor. The protein is Dihydroorotate dehydrogenase (quinone) of Acinetobacter baylyi (strain ATCC 33305 / BD413 / ADP1).